Here is a 362-residue protein sequence, read N- to C-terminus: Aminomethyltransferase (362 aa).

It belongs to the GcvT family. As to quaternary structure, the glycine cleavage system is composed of four proteins: P, T, L and H.

The catalysed reaction is N(6)-[(R)-S(8)-aminomethyldihydrolipoyl]-L-lysyl-[protein] + (6S)-5,6,7,8-tetrahydrofolate = N(6)-[(R)-dihydrolipoyl]-L-lysyl-[protein] + (6R)-5,10-methylene-5,6,7,8-tetrahydrofolate + NH4(+). The glycine cleavage system catalyzes the degradation of glycine. This is Aminomethyltransferase from Listeria monocytogenes serotype 4a (strain HCC23).